The primary structure comprises 299 residues: MKPDAHQVKQFLLNLQDTICQQLTAVDGAEFVEDSWQRESGGGGRSRVLRNGGVFEQAGVNFSHVHGEAMPASATAHRPELAGRSFEAMGVSLVVHPHNPYVPTSHANVRFFIAEKPGAEPVWWFGGGFDLTPFYGFEEDAIHWHRTARDLCLPFGEDVYPRYKKWCDDYFYLKHRNEQRGIGGLFFDDLNTPDFDHCFAFMQAVGKGYTDAYLPIVERRKAMAYAERERNFQLYRRGRYVEFNLVWDRGTLFGLQTGGRTESILMSMPPLVRWEYDYQPKDGSPEAALSEFIKVRDWV.

Ser-92 serves as a coordination point for substrate. Positions 96 and 106 each coordinate a divalent metal cation. The Proton donor role is filled by His-106. 108-110 (NVR) is a substrate binding site. A divalent metal cation-binding residues include His-145 and His-175. An important for dimerization region spans residues 240-275 (YVEFNLVWDRGTLFGLQTGGRTESILMSMPPLVRWE). 258–260 (GGR) is a binding site for substrate.

This sequence belongs to the aerobic coproporphyrinogen-III oxidase family. Homodimer. It depends on a divalent metal cation as a cofactor.

Its subcellular location is the cytoplasm. The enzyme catalyses coproporphyrinogen III + O2 + 2 H(+) = protoporphyrinogen IX + 2 CO2 + 2 H2O. It functions in the pathway porphyrin-containing compound metabolism; protoporphyrin-IX biosynthesis; protoporphyrinogen-IX from coproporphyrinogen-III (O2 route): step 1/1. Functionally, involved in the heme biosynthesis. Catalyzes the aerobic oxidative decarboxylation of propionate groups of rings A and B of coproporphyrinogen-III to yield the vinyl groups in protoporphyrinogen-IX. This chain is Oxygen-dependent coproporphyrinogen-III oxidase, found in Shigella dysenteriae serotype 1 (strain Sd197).